The sequence spans 1041 residues: Protein EGT2 (1041 aa).

An N-terminal signal peptide occupies residues 1 to 20 (MNKLLLHLVRVISILGLANA). N-linked (GlcNAc...) asparagine glycans are attached at residues asparagine 65, asparagine 103, asparagine 161, asparagine 175, asparagine 249, asparagine 332, asparagine 401, asparagine 435, asparagine 465, asparagine 485, asparagine 506, asparagine 526, asparagine 544, and asparagine 556. The interval 388–410 (SSSSISLSAPSSSNSTFTTPSSS) is disordered. Repeat 1 spans residues 457-492 (SSTLSYTSNVTISVSSATQHTTTPSYVSNSTTLSSS). The interval 457-962 (SSTLSYTSNV…TLKTSTFQKA (506 aa)) is 9 X approximate repeats. Repeat copies occupy residues 577 to 606 (TVAS…ISTI) and 613 to 647 (SGTD…INTN). N-linked (GlcNAc...) asparagine glycosylation is found at asparagine 635, asparagine 636, asparagine 657, and asparagine 709. The stretch at 716–745 (TDKSDTYSVISSTESAQVTEYDSLLPISTL) is repeat 4. N-linked (GlcNAc...) asparagine glycosylation occurs at asparagine 756. Repeat copies occupy residues 773 to 802 (TDKG…ISTL), 811 to 840 (TDES…ISTL), 849 to 886 (TGES…TSLS), 887 to 924 (TEES…TSLS), and 925 to 962 (TEES…FQKA). The GPI-anchor amidated glycine moiety is linked to residue glycine 1020. Residues 1021–1041 (AAGQLTIRIGSLLLGLISFLL) constitute a propeptide, removed in mature form.

In terms of processing, the GPI-anchor is attached to the protein in the endoplasmic reticulum and serves to target the protein to the cell surface. There, the glucosamine-inositol phospholipid moiety is cleaved off and the GPI-modified mannoprotein is covalently attached via its lipidless GPI glycan remnant to the 1,6-beta-glucan of the outer cell wall layer.

Its subcellular location is the secreted. The protein resides in the cell wall. It is found in the membrane. In terms of biological role, seems to be involved in the correct timing of cell separation after cytokinesis, as separation of mutant daughter cells is delayed. Could either be an enzyme necessary for glucans-degradation of the cell wall at the neck region between mother and daughter cells or a regulatory protein controlling this metabolic step. This is Protein EGT2 (EGT2) from Saccharomyces cerevisiae (strain ATCC 204508 / S288c) (Baker's yeast).